The following is an 81-amino-acid chain: Tissue- and phase-specific nuclear protein (81 aa).

As to expression, expressed in oviduct, where expression levels are higher in uterine sections than in tuba sections. No expression detected in small intestine and liver (at protein level).

The protein localises to the nucleus. This chain is Tissue- and phase-specific nuclear protein, found in Podarcis siculus (Italian wall lizard).